A 400-amino-acid chain; its full sequence is Cytoplasmic polyadenylated homeobox-like protein 2 (400 aa).

Residues 1–29 (MSSQAFPAEEDHHNEERQTKKKRKTKHRH) are disordered. Basic and acidic residues predominate over residues 9 to 18 (EEDHHNEERQ). Residues 19–29 (TKKKRKTKHRH) are compositionally biased toward basic residues. Residues 24 to 83 (KTKHRHKFSEELLQELKEIFGENGYPDFTTRKTLANKFDCPVNVINNWFQNNRARLPPEE) constitute a DNA-binding region (homeobox).

It localises to the nucleus. This Homo sapiens (Human) protein is Cytoplasmic polyadenylated homeobox-like protein 2.